The sequence spans 808 residues: Leucine--tRNA ligase (808 aa).

The 'HIGH' region signature appears at 40–51 (PYPSGQGLHVGH). A 'KMSKS' region motif is present at residues 580-584 (KMSKS). Residue K583 coordinates ATP.

Belongs to the class-I aminoacyl-tRNA synthetase family.

It localises to the cytoplasm. The enzyme catalyses tRNA(Leu) + L-leucine + ATP = L-leucyl-tRNA(Leu) + AMP + diphosphate. This Leuconostoc mesenteroides subsp. mesenteroides (strain ATCC 8293 / DSM 20343 / BCRC 11652 / CCM 1803 / JCM 6124 / NCDO 523 / NBRC 100496 / NCIMB 8023 / NCTC 12954 / NRRL B-1118 / 37Y) protein is Leucine--tRNA ligase.